The chain runs to 484 residues: Cysteine--tRNA ligase (484 aa).

Cys-29 lines the Zn(2+) pocket. The short motif at 31–41 (PTVQSAPHIGH) is the 'HIGH' region element. Cys-219, His-244, and Glu-248 together coordinate Zn(2+). The 'KMSKS' region signature appears at 275 to 279 (KMSKS). Residue Lys-278 participates in ATP binding.

It belongs to the class-I aminoacyl-tRNA synthetase family. Monomer. Requires Zn(2+) as cofactor.

The protein resides in the cytoplasm. It carries out the reaction tRNA(Cys) + L-cysteine + ATP = L-cysteinyl-tRNA(Cys) + AMP + diphosphate. This Clavibacter michiganensis subsp. michiganensis (strain NCPPB 382) protein is Cysteine--tRNA ligase.